The chain runs to 434 residues: D-amino acid dehydrogenase (434 aa).

Residue 3–17 (VLVLGSGVIGTTSAW) coordinates FAD.

It belongs to the DadA oxidoreductase family. It depends on FAD as a cofactor.

It carries out the reaction a D-alpha-amino acid + A + H2O = a 2-oxocarboxylate + AH2 + NH4(+). It participates in amino-acid degradation; D-alanine degradation; NH(3) and pyruvate from D-alanine: step 1/1. Functionally, oxidative deamination of D-amino acids. In Stenotrophomonas maltophilia (strain K279a), this protein is D-amino acid dehydrogenase.